The following is a 366-amino-acid chain: PTI1-like tyrosine-protein kinase 2 (366 aa).

Residues 8-23 (GDKKGDSDLSNEEVHL) are compositionally biased toward basic and acidic residues. The interval 8 to 50 (GDKKGDSDLSNEEVHLKSPWQNSEANQKNQKPQAVVKPEAQKE) is disordered. Over residues 26 to 39 (PWQNSEANQKNQKP) the composition is skewed to polar residues. Positions 71 to 353 (FGSKSLIGEG…IVVKALQPLL (283 aa)) constitute a Protein kinase domain. Residues 77 to 85 (IGEGSYGRV) and lysine 99 contribute to the ATP site. Catalysis depends on aspartate 203, which acts as the Proton acceptor.

It belongs to the protein kinase superfamily. Tyr protein kinase family. Interacts with OXI1. In terms of processing, autophosphorylated and phosphorylated by OXI1.

It catalyses the reaction L-tyrosyl-[protein] + ATP = O-phospho-L-tyrosyl-[protein] + ADP + H(+). With respect to regulation, strongly activated in response to phosphatidic acid (PA) and xylanase in a OXI1- and PDK1-dependent manner, and, to a lesser extent, by hydrogen peroxide and flagellin in a OXI1-dependent manner. Functionally, probable tyrosine-protein kinase involved in oxidative burst-mediated signaling leading to specific genes expression. This Arabidopsis thaliana (Mouse-ear cress) protein is PTI1-like tyrosine-protein kinase 2 (PTI12).